Here is an 822-residue protein sequence, read N- to C-terminus: MSEGTYQRLWEASHATLEEVLEKEPSPLEPVLTRERQSFQYRISVLYLYYLGLLRRFNLAYDQMVQPQKRRLLRRLLDGVAGRVLELKDELVRVDLCETHCLDRVLQELKLTPVDLEVPIPKYFQLEQTSTMKARQQMLAEILARLEPLASQENLRGMSRTEALIIVQCAERARQGRLRATFMREIRKEEERDRRIRENGRQKFSQDQGAIVIQKVWKGYLQRKRIEQDRRMEMEFIGMLPSSSQTTRQNALAQAFVGEESRRTRQVEKEEEFQEAIAKTHESLTETEGPDMKERMKDQIRQWFIECHALTGRFPDYPDEASGGSYLIFADKTPEQVRQELEAQAQENKKKEQEKNKDKVKEKKEKKKKKTKEEKAKKDPEVMFKVLPSKSIPVINAGHEEFTSIWKSRYDNKHPSQSFDSETLREEKRKQVEMEIRVQVDELMRQELRNLRLAVDREETRPLKSPKKKGGKKSGKKKKEKDLTPDRSVDSLFEELVVIGLIKKSLLVTLNDYIGDCLYLGSTLTLANKIPMPSLFDIRQNIALYGVLRLGSHDIHTMAPLVRSILLVGPSGMGKKMLVQAVCTETGANLFDLSPGNVMGKYPGKNGSQLLMHIVFKVARVFQPSVIWIGNTEKTFYKKIPKEERRMDPKRIKKDLMRATRQLGPGDRVMLIGTTERPQLAEMKGLCRFYERILFIPRPDYASRYVLWKRMIENQGIGVQQTQSLDISALARVSDGYTPGHILQSIQSVLTERRLLQLTKKPLVASEFVVHLAKLDPVYREEEESLKEWFYKTPLGKKNIKFTKDQQEAEEARLAKEKKKKK.

One can recognise an IQ domain in the interval 206–235; it reads QDQGAIVIQKVWKGYLQRKRIEQDRRMEME. Residues 338-363 show a composition bias toward basic and acidic residues; that stretch reads RQELEAQAQENKKKEQEKNKDKVKEK. Disordered stretches follow at residues 338–378 and 457–484; these read RQEL…KAKK and REET…KDLT. The segment covering 464 to 479 has biased composition (basic residues); sequence KSPKKKGGKKSGKKKK. 569-576 contributes to the ATP binding site; sequence GPSGMGKK.

This sequence belongs to the AAA ATPase family.

This chain is IQ and AAA domain-containing protein 1-like (Iqca1l), found in Rattus norvegicus (Rat).